The sequence spans 406 residues: Trk system potassium uptake protein trkA homolog 1 (406 aa).

In terms of domain architecture, RCK N-terminal 1 spans 1 to 124; sequence MKAVIIGAGE…RAQVGVDLMI (124 aa). NAD(+)-binding positions include 7–11, D29, 70–71, and R101; these read GAGEV and TG. One can recognise an RCK C-terminal domain in the interval 144 to 225; that stretch reads IDAEMFAEGK…MEDLESVFGS (82 aa). The 119-residue stretch at 230 to 348 folds into the RCK N-terminal 2 domain; it reads RTRILLIGCG…FEMVGIDMAV (119 aa). 232–262 serves as a coordination point for NAD(+); the sequence is RILLIGCGIVGMYLAKLIDKEENADLRIIEH.

Functionally, part of a potassium transport system. This is Trk system potassium uptake protein trkA homolog 1 (trkA1) from Methanosarcina mazei (Methanosarcina frisia).